The primary structure comprises 456 residues: RuvB-like helicase 1 (456 aa).

ATP is bound at residue 71-78 (GGAGTGKT).

The protein belongs to the RuvB family. May form heterododecamers with RVB2. Component of the SWR1 chromatin remodeling complex, the INO80 chromatin remodeling complex, and of the R2TP complex.

It is found in the nucleus. It catalyses the reaction ATP + H2O = ADP + phosphate + H(+). Its function is as follows. DNA helicase which participates in several chromatin remodeling complexes, including the SWR1 and the INO80 complexes. The SWR1 complex mediates the ATP-dependent exchange of histone H2A for the H2A variant HZT1 leading to transcriptional regulation of selected genes by chromatin remodeling. The INO80 complex remodels chromatin by shifting nucleosomes and is involved in DNA repair. Also involved in pre-rRNA processing. The chain is RuvB-like helicase 1 (rvb1) from Schizosaccharomyces pombe (strain 972 / ATCC 24843) (Fission yeast).